Reading from the N-terminus, the 207-residue chain is Outer-membrane lipoprotein LolB (207 aa).

Positions 1–21 (MPMRKRHFYRLLPLASLLLAA) are cleaved as a signal peptide. The N-palmitoyl cysteine moiety is linked to residue cysteine 22. A lipid anchor (S-diacylglycerol cysteine) is attached at cysteine 22.

It belongs to the LolB family. Monomer.

Its subcellular location is the cell outer membrane. In terms of biological role, plays a critical role in the incorporation of lipoproteins in the outer membrane after they are released by the LolA protein. In Yersinia pseudotuberculosis serotype O:1b (strain IP 31758), this protein is Outer-membrane lipoprotein LolB.